The sequence spans 531 residues: Probable rhamnogalacturonate lyase A (531 aa).

The first 20 residues, 1–20 (MLSKALFFSSLPLWAKVASA), serve as a signal peptide directing secretion. Cystine bridges form between C50–C93 and C184–C193. N-linked (GlcNAc...) asparagine glycosylation occurs at N351.

Belongs to the polysaccharide lyase 4 family.

Its subcellular location is the secreted. It carries out the reaction Endotype eliminative cleavage of L-alpha-rhamnopyranosyl-(1-&gt;4)-alpha-D-galactopyranosyluronic acid bonds of rhamnogalacturonan I domains in ramified hairy regions of pectin leaving L-rhamnopyranose at the reducing end and 4-deoxy-4,5-unsaturated D-galactopyranosyluronic acid at the non-reducing end.. Functionally, pectinolytic enzymes consist of four classes of enzymes: pectin lyase, polygalacturonase, pectin methylesterase and rhamnogalacturonase. Degrades the rhamnogalacturonan I (RG-I) backbone of pectin. The chain is Probable rhamnogalacturonate lyase A (rglA) from Aspergillus terreus (strain NIH 2624 / FGSC A1156).